Here is a 354-residue protein sequence, read N- to C-terminus: Protein NDH-DEPENDENT CYCLIC ELECTRON FLOW 5 (354 aa).

A chloroplast-targeting transit peptide spans 1-49 (MALVHYMNVSRSTFPLSRSSKINLSSSFASLPLQFHKNIKRLESSVPPS).

It localises to the plastid. It is found in the chloroplast thylakoid membrane. In terms of biological role, required for both formation and activity of the chloroplast NAD(P)H dehydrogenase (NDH) complex of the photosynthetic electron transport chain. May function in assembly or stabilization of the NDH complex. The polypeptide is Protein NDH-DEPENDENT CYCLIC ELECTRON FLOW 5 (Arabidopsis thaliana (Mouse-ear cress)).